Reading from the N-terminus, the 121-residue chain is Protein SNORC (121 aa).

The N-terminal stretch at 1–24 is a signal peptide; sequence MASCLALRVALLLISGVLAPAVLT. Residues 25–92 are Extracellular-facing; it reads AEGPQEPDPT…QDGGSLGPGA (68 aa). The interval 26–84 is disordered; it reads EGPQEPDPTLWNEPIELPSGEGPLESTSHNQEFAVSGPPFPTSAPAPEDSTPPARVDQD. Residues 93 to 113 traverse the membrane as a helical segment; sequence IAAIVIAALLATCVVLALVVV. The Cytoplasmic portion of the chain corresponds to 114 to 121; sequence ALRKFSAS.

As to quaternary structure, interacts (via the extracellular domain) with FGF2. As to expression, expressed only in cartilage, including nasal, knee epiphyseal and rib tissues. In proliferation and hypertrophic chondrocytes, detected intracellulary and in the pericellular extracellular matrix. In primary spongiosa, detected only in the extracellular matrix.

It localises to the membrane. The protein localises to the cytoplasm. It is found in the secreted. The protein resides in the extracellular space. Its subcellular location is the extracellular matrix. In terms of biological role, plays a role in the regulation of chondrocyte maturation and postnatal endochondral ossification. May inhibit cell growth stimulation induced by FGF2. This is Protein SNORC from Mus musculus (Mouse).